The sequence spans 192 residues: Chromophore lyase CpcS/CpeS 2 (192 aa).

The protein belongs to the CpcS/CpeS biliprotein lyase family.

Functionally, covalently attaches a chromophore to Cys residue(s) of phycobiliproteins. In Synechocystis sp. (strain ATCC 27184 / PCC 6803 / Kazusa), this protein is Chromophore lyase CpcS/CpeS 2.